The sequence spans 406 residues: Corticosteroid-binding globulin (406 aa).

A signal peptide spans 1 to 22 (MPLLLYTCLLWLLSSGLWTVQA). N-linked (GlcNAc...) asparagine glycans are attached at residues N31 and N96. Q255 provides a ligand contact to cortisol. An N-linked (GlcNAc...) asparagine glycan is attached at N261. D287 serves as a coordination point for cortisol. N-linked (GlcNAc...) asparagine glycosylation is found at N331 and N360. W394 is a cortisol binding site.

The protein belongs to the serpin family. In terms of tissue distribution, expressed by the liver; secreted in plasma.

The protein resides in the secreted. In terms of biological role, major transport protein for glucocorticoids and progestins in the blood of almost all vertebrate species. The protein is Corticosteroid-binding globulin (SERPINA6) of Saimiri sciureus (Common squirrel monkey).